A 169-amino-acid chain; its full sequence is Protein yop1 (169 aa).

Topologically, residues 1–35 are cytoplasmic; it reads MASFQDRAQHTIAQLDKELSKYPVLNNLERQTSVP. The helical transmembrane segment at 36-55 threads the bilayer; sequence KVYVILGLVGIYTFLVFFNI. Position 56 (Ala56) is a topological domain, lumenal. A helical membrane pass occupies residues 57–76; it reads GEFLVNFAGFLIPGYYSLNA. The Cytoplasmic portion of the chain corresponds to 77 to 86; sequence LFTSGKADDT. Residues 87–103 traverse the membrane as a helical segment; sequence QWLTYWVVYALLTVVES. The Lumenal portion of the chain corresponds to 104-105; it reads AI. Residues 106 to 124 form a helical membrane-spanning segment; it reads NAAYWFPFYYIFKFVLILW. Residues 125–169 lie on the Cytoplasmic side of the membrane; that stretch reads MSLPQTNGAQVVFHSFLQPVLGRFFTSGSTSANLRAQADAASKSQ.

This sequence belongs to the DP1 family. Oligomer.

It localises to the endoplasmic reticulum membrane. The protein resides in the golgi apparatus membrane. Functionally, required to generate and maintain the structure of the tubular endoplasmic reticulum network and the vacuole. Induces high curvature in membranes and causes membrane tubule formation. Involved in membrane/vesicle trafficking. This chain is Protein yop1 (yop1), found in Aspergillus fumigatus (strain ATCC MYA-4609 / CBS 101355 / FGSC A1100 / Af293) (Neosartorya fumigata).